Consider the following 429-residue polypeptide: Serine hydroxymethyltransferase 1 (429 aa).

(6S)-5,6,7,8-tetrahydrofolate is bound by residues leucine 125 and 129–131 (GHL). Position 234 is an N6-(pyridoxal phosphate)lysine (lysine 234).

This sequence belongs to the SHMT family. Homodimer. Pyridoxal 5'-phosphate serves as cofactor.

It localises to the cytoplasm. The catalysed reaction is (6R)-5,10-methylene-5,6,7,8-tetrahydrofolate + glycine + H2O = (6S)-5,6,7,8-tetrahydrofolate + L-serine. It functions in the pathway one-carbon metabolism; tetrahydrofolate interconversion. It participates in amino-acid biosynthesis; glycine biosynthesis; glycine from L-serine: step 1/1. Its function is as follows. Catalyzes the reversible interconversion of serine and glycine with tetrahydrofolate (THF) serving as the one-carbon carrier. This reaction serves as the major source of one-carbon groups required for the biosynthesis of purines, thymidylate, methionine, and other important biomolecules. Also exhibits THF-independent aldolase activity toward beta-hydroxyamino acids, producing glycine and aldehydes, via a retro-aldol mechanism. This is Serine hydroxymethyltransferase 1 from Agrobacterium fabrum (strain C58 / ATCC 33970) (Agrobacterium tumefaciens (strain C58)).